We begin with the raw amino-acid sequence, 119 residues long: Beta-2-microglobulin (119 aa).

The signal sequence occupies residues 1 to 20 (MAPFVAIALLVLLSLSGLEA). Positions 25–114 (PKIQVYSRHP…VTFSTPKTVK (90 aa)) constitute an Ig-like C1-type domain. A disulfide bridge connects residues cysteine 45 and cysteine 100.

The protein belongs to the beta-2-microglobulin family. In terms of assembly, heterodimer of an alpha chain and a beta chain. Beta-2-microglobulin is the beta-chain of major histocompatibility complex class I molecules.

The protein localises to the secreted. Component of the class I major histocompatibility complex (MHC). Involved in the presentation of peptide antigens to the immune system. The protein is Beta-2-microglobulin (B2M) of Cheracebus torquatus (Collared titi monkey).